Here is a 667-residue protein sequence, read N- to C-terminus: Transmembrane 9 superfamily member 1 (667 aa).

The signal sequence occupies residues 1-22 (MIYKMAHVQLLLLYFFVSTVKA). The Lumenal segment spans residues 23–302 (FYLPGVAPTT…DKYLHVYDPS (280 aa)). Residues Asn61 and Asn282 are each glycosylated (N-linked (GlcNAc...) asparagine). The helical transmembrane segment at 303 to 323 (IQWFSLINFSLVVVLLSSVVI) threads the bilayer. Residues 324–370 (HSLLRALKSDFARYNELNLDDDFQEDSGWKLNHGDVFRSPSQSLTLS) are Cytoplasmic-facing. Residues 371 to 391 (ILVGSGVQLFLMVTCSIFFAA) form a helical membrane-spanning segment. The Lumenal portion of the chain corresponds to 392–405 (LGFLSPSSRGSLAT). A helical membrane pass occupies residues 406–426 (VMFILYALFGFVGSYTSMGIY). The Cytoplasmic portion of the chain corresponds to 427-442 (KFFNGPYWKANLILTP). The helical transmembrane segment at 443 to 463 (LLVPGAILLIIIALNFFLMFV) threads the bilayer. Topologically, residues 464-474 (HSSGVIPASTL) are lumenal. Residues 475-495 (FFMVFLWFLFSIPLSFAGSLI) form a helical membrane-spanning segment. Topologically, residues 496 to 527 (ARKRCHWDEHPTKTNQIARQIPFQPWYLKTIP) are cytoplasmic. The chain crosses the membrane as a helical span at residues 528–548 (ATLIAGIFPFGSIAVELYFIY). Topologically, residues 549-560 (TSLWFNKIFYMF) are lumenal. The helical transmembrane segment at 561–581 (GFLFFSFLLLTLTSSLVTILI) threads the bilayer. Residues 582–596 (TYHSLCLENWKWQWR) are Cytoplasmic-facing. Residues 597–617 (GFIIGGAGCALYVFIHSILFT) traverse the membrane as a helical segment. The Lumenal portion of the chain corresponds to 618–635 (KFKLGGFTTIVLYVGYSS). A helical transmembrane segment spans residues 636 to 656 (VISLLCCLVTGSIGFISSMLF). Residues 657–667 (VRKIYSSIKVD) lie on the Cytoplasmic side of the membrane.

This sequence belongs to the nonaspanin (TM9SF) (TC 9.A.2) family.

It is found in the endosome membrane. Its subcellular location is the vacuole membrane. Its function is as follows. With TMN2 and TMN3, plays a critical role in the late stages of a nutrient-controlled pathway notably regulating FLO11 gene expression. Acts downstream of RAS2 and TOR. Essential for cell adhesion and filamentous growth. May play a role as effector of cellular copper homeostasis. The sequence is that of Transmembrane 9 superfamily member 1 (EMP70) from Saccharomyces cerevisiae (strain ATCC 204508 / S288c) (Baker's yeast).